Here is a 308-residue protein sequence, read N- to C-terminus: MNSKRMLLLVLFAFSLMLVERYFRNHQVEELRLSDWFHPRKRPDVITKTDWLAPIVWEGTFDRQVLEKHYRRRNITVGLAVFATGRFAEEYLRLFLHSANKHFMTGYRVIFYIMVDAFLQLPDIQPSPLRTFKAFEVDAERWWLEGSLVYMKSLGEHITSHIQDEVDFLFSMAVNQVFQNEFGVETLGPLVAQLHAWWYFRNTKNFPYERRPTSAASIPFGQGDFYYGSLMVGGTPRNILDFIEEYLNGVIHDIKNGLNSTYEKHLNKYFYLNKPTKLLSPEYSWDLAFSPPPQIQYVKVAHDSHRKL.

Residues 1–6 lie on the Cytoplasmic side of the membrane; that stretch reads MNSKRM. The helical; Signal-anchor for type II membrane protein transmembrane segment at 7-23 threads the bilayer; that stretch reads LLLVLFAFSLMLVERYF. Residues 24–308 lie on the Lumenal side of the membrane; that stretch reads RNHQVEELRL…KVAHDSHRKL (285 aa). Asn74 carries an N-linked (GlcNAc...) asparagine glycan. Substrate is bound by residues 82–87, 173–175, and 195–198; these read FATGRF, AVN, and HAWW. Glu263 (nucleophile) is an active-site residue.

Belongs to the glycosyltransferase 6 family. Mn(2+) is required as a cofactor.

The protein localises to the membrane. In Macaca fascicularis (Crab-eating macaque), this protein is Glycosyltransferase 6 domain-containing protein 1 (GLT6D1).